Consider the following 1044-residue polypeptide: Elongation factor 3B (1044 aa).

At serine 2 the chain carries N-acetylserine. The stretch at glutamine 5–isoleucine 42 is one HEAT 1 repeat. 3 residues coordinate ADP: isoleucine 42, histidine 44, and serine 83. HEAT repeat units follow at residues proline 86–proline 123, valine 124–glutamate 162, leucine 166–asparagine 203, aspartate 205–proline 241, alanine 242–aspartate 279, and proline 285–valine 323. Lysine 187 and lysine 196 each carry N6,N6,N6-trimethyllysine. Residues threonine 392, histidine 396, and glutamate 397 each contribute to the ADP site. 2 ABC transporter domains span residues aspartate 426 to leucine 641 and valine 667 to glutamate 993. Residue asparagine 703 coordinates ADP. Lysine 789 carries the post-translational modification N6,N6,N6-trimethyllysine. Positions 922, 925, and 951 each coordinate ADP. Position 972 is a phosphothreonine (threonine 972). The residue at position 974 (serine 974) is a Phosphoserine. A disordered region spans residues glycine 975 to phenylalanine 1044. Basic and acidic residues predominate over residues arginine 987 to aspartate 999. Positions arginine 1020–lysine 1031 are enriched in basic residues. Residues serine 1039 and serine 1040 each carry the phosphoserine modification.

Belongs to the ABC transporter superfamily. ABCF family. EF3 subfamily. In terms of assembly, monomer.

Its subcellular location is the cytoplasm. It carries out the reaction ATP + H2O = ADP + phosphate + H(+). It participates in protein biosynthesis; polypeptide chain elongation. Ribosome-dependent ATPase that promotes the translation of proteins required for detoxification of reactive oxygen species. Required for the ATP-dependent release of deacylated tRNA from the ribosomal E-site during protein biosynthesis. Stimulates the eEF1A-dependent binding of aminoacyl-tRNA to the ribosomal A-site, which has reduced affinity for tRNA as long as the E-site is occupied. Assists translation termination by stimulating the release of nascent protein from the ribosome by release factors. This is Elongation factor 3B from Saccharomyces cerevisiae (strain ATCC 204508 / S288c) (Baker's yeast).